A 141-amino-acid polypeptide reads, in one-letter code: Hydroperoxide reductase (141 aa).

Belongs to the OsmC/Ohr family. As to quaternary structure, homodimer.

It localises to the cytoplasm. Reduces organic and inorganic peroxide substrates. Protects the cell against oxidative stress. The sequence is that of Hydroperoxide reductase from Mycoplasma genitalium (strain ATCC 33530 / DSM 19775 / NCTC 10195 / G37) (Mycoplasmoides genitalium).